Reading from the N-terminus, the 914-residue chain is Alanine--tRNA ligase (914 aa).

Residues histidine 608, histidine 612, cysteine 711, and histidine 715 each contribute to the Zn(2+) site.

This sequence belongs to the class-II aminoacyl-tRNA synthetase family. The cofactor is Zn(2+).

The protein resides in the cytoplasm. The enzyme catalyses tRNA(Ala) + L-alanine + ATP = L-alanyl-tRNA(Ala) + AMP + diphosphate. Its function is as follows. Catalyzes the attachment of alanine to tRNA(Ala) in a two-step reaction: alanine is first activated by ATP to form Ala-AMP and then transferred to the acceptor end of tRNA(Ala). Also edits incorrectly charged Ser-tRNA(Ala) and Gly-tRNA(Ala) via its editing domain. This chain is Alanine--tRNA ligase, found in Methanoregula boonei (strain DSM 21154 / JCM 14090 / 6A8).